We begin with the raw amino-acid sequence, 2439 residues long: Protein roller-3 (2439 aa).

Residues 1 to 26 form the signal peptide; it reads MLDFPRFSLFLFLLFSSFLFSSFVHA. Residues 27–1851 lie on the Extracellular side of the membrane; the sequence is ATVFSSSLKT…EEEKGGILPY (1825 aa). N-linked (GlcNAc...) asparagine glycans are attached at residues N64, N182, N334, N394, N496, N533, N657, N766, N868, N1003, N1036, N1090, and N1261. The Fibronectin type-III 1 domain maps to 618–720; the sequence is KPRIVAVSSI…STSNTALPDL (103 aa). Fibronectin type-III domains are found at residues 1403–1503, 1507–1628, 1629–1732, and 1738–1843; these read SKGI…TGFG, APRD…TLDV, PGTL…IQQA, and VPTA…EKEE. N-linked (GlcNAc...) asparagine glycans are attached at residues N1567, N1636, N1677, and N1779. A helical transmembrane segment spans residues 1852–1872; that stretch reads FLGISIILLLAAMILVGCFWL. The Cytoplasmic segment spans residues 1873–2439; the sequence is KSRRRQQMKK…GGTCRSVSQV (567 aa). Residues 1928–2199 form the Protein kinase domain; it reads VEIVRHISDC…ATILKIFETC (272 aa). ATP-binding positions include 1934–1942 and K1963; that span reads ISDCSYGSV. Disordered stretches follow at residues 2214 to 2277, 2315 to 2348, and 2412 to 2439; these read NEGS…RPAT, SQRP…NRTN, and HLRA…VSQV. Polar residues-rich tracts occupy residues 2216–2233, 2334–2347, and 2420–2439; these read GSDN…SSRE, ATSS…SNRT, and PPTR…VSQV.

The protein resides in the membrane. Its function is as follows. Involved in larval development and locomotion. This is Protein roller-3 from Caenorhabditis briggsae.